Here is a 259-residue protein sequence, read N- to C-terminus: UPF0246 protein NMCC_0856 (259 aa).

This sequence belongs to the UPF0246 family.

This chain is UPF0246 protein NMCC_0856, found in Neisseria meningitidis serogroup C (strain 053442).